A 328-amino-acid chain; its full sequence is m7GpppN-mRNA hydrolase NUDT17 (328 aa).

Positions glycine 90–proline 236 constitute a Nudix hydrolase domain. The Nudix box motif lies at glycine 127 to glycine 148. 2 residues coordinate Mg(2+): glutamate 142 and glutamate 146. A disordered region spans residues proline 299–lysine 328.

Belongs to the Nudix hydrolase family. The cofactor is Mg(2+). It depends on Mn(2+) as a cofactor.

It catalyses the reaction a 5'-end (N(7)-methyl 5'-triphosphoguanosine)-ribonucleoside in mRNA + H2O = N(7)-methyl-GDP + a 5'-end phospho-ribonucleoside in mRNA + 2 H(+). In terms of biological role, acts as a decapping enzyme capable of hydrolyzing monomethylated capped RNAs (in vitro). Hydrolyzes monomethylated capped RNA after alpha and beta phosphates to form N(7)-methyl-GDP. Shows low activity towards unmethylated capped RNA. The polypeptide is m7GpppN-mRNA hydrolase NUDT17 (NUDT17) (Homo sapiens (Human)).